The sequence spans 561 residues: Lengsin (561 aa).

2 disordered regions span residues Met-1–Ala-78 and Ser-91–Asn-112. The span at Asn-26–Lys-37 shows a compositional bias: basic residues. Polar residues predominate over residues Met-50–Asp-63. The region spanning Asn-135 to Gly-229 is the GS beta-grasp domain. The 326-residue stretch at Pro-236–Ile-561 folds into the GS catalytic domain.

It belongs to the glutamine synthetase family. As to quaternary structure, dodecamer. Interacts with BFSP2 and VIM. Expressed in lens.

Its function is as follows. May act as a component of the cytoskeleton or as a chaperone for the reorganization of intermediate filament proteins during terminal differentiation in the lens. Does not seem to have enzymatic activity. The protein is Lengsin (Lgsn) of Rattus norvegicus (Rat).